A 199-amino-acid chain; its full sequence is Ras-related protein Rab-7b (199 aa).

GTP is bound by residues 15-22 (GALGVGKT), 34-40 (FEEYQTT), 63-67 (DTGGQ), 124-127 (NKID), and 154-155 (AK). Short sequence motifs (switch) lie at residues 28–41 (YVHK…QTTL) and 67–82 (QERF…KGSD). Phosphoserine is present on S186. S-geranylgeranyl cysteine attachment occurs at residues C198 and C199.

It belongs to the small GTPase superfamily. Rab family.

Its subcellular location is the late endosome. The protein localises to the lysosome. The protein resides in the golgi apparatus. It is found in the trans-Golgi network. It localises to the cytoplasmic vesicle. Its subcellular location is the phagosome. The protein localises to the phagosome membrane. Controls vesicular trafficking from endosomes to the trans-Golgi network (TGN). Acts as a negative regulator of TLR9 signaling and can suppress TLR9-triggered TNFA, IL6, and IFNB production in macrophages by promoting TLR9 lysosomal degradation. Also negatively regulates TLR4 signaling in macrophages by promoting lysosomal degradation of TLR4. Promotes megakaryocytic differentiation by increasing NF-kappa-B-dependent IL6 production and subsequently enhancing the association of STAT3 with GATA1. Not involved in the regulation of the EGF- and EGFR degradation pathway. This chain is Ras-related protein Rab-7b (Rab7b), found in Mus musculus (Mouse).